Consider the following 101-residue polypeptide: Conantokin-L (101 aa).

The N-terminal stretch at Met-1–Gly-21 is a signal peptide. The propeptide occupies Thr-22–Arg-80. A 4-carboxyglutamate mark is found at Glu-83, Glu-84, Glu-91, and Glu-95. Residues Glu-91 and Glu-95 each contribute to the a divalent metal cation site. An Asparagine amide modification is found at Asn-99.

The protein belongs to the conotoxin B superfamily. It depends on Ca(2+) as a cofactor. Mg(2+) is required as a cofactor. As to expression, expressed by the venom duct.

The protein resides in the secreted. Functionally, conantokins inhibit N-methyl-D-aspartate (NMDA) receptors. This toxin is far less potent as an anticonvulsant compound than conantokin-R. It induces sleep-like symptoms in mice. The protein is Conantokin-L of Conus lynceus (Lynceus cone).